The sequence spans 85 residues: Homeobox protein knotted-1-like 4 (85 aa).

An ELK domain is found at 1 to 21; sequence ELKYQLLKKYSGYLSSLRQEF. A DNA-binding region (homeobox; TALE-type) is located at residues 22 to 85; the sequence is SKKKKKGKLP…NQRKRHWKPS (64 aa).

Belongs to the TALE/KNOX homeobox family. As to expression, strongly expressed in ear inflorescence primordia and shoot meristem. Weakly expressed in embryos. Absent from leaves.

The protein resides in the nucleus. In terms of biological role, probably binds to the DNA sequence 5'-TGAC-3'. In Zea mays (Maize), this protein is Homeobox protein knotted-1-like 4 (KNOX4).